The sequence spans 118 residues: UPF0295 protein BCE33L0445 (118 aa).

Transmembrane regions (helical) follow at residues 12-32 (IRTF…LGVF) and 43-63 (FMMV…WIGM).

This sequence belongs to the UPF0295 family.

The protein localises to the cell membrane. In Bacillus cereus (strain ZK / E33L), this protein is UPF0295 protein BCE33L0445.